A 189-amino-acid polypeptide reads, in one-letter code: Fine tangled pili major subunit (189 aa).

The protein belongs to the Dps family. Hexamer.

It localises to the fimbrium. May contribute to bacterial adherence, or be involved in the protection of the bacteria, or both. The protein is Fine tangled pili major subunit (ftpA) of Haemophilus ducreyi (strain 35000HP / ATCC 700724).